The chain runs to 380 residues: Alpha-N-acetylneuraminate alpha-2,8-sialyltransferase ST8SIA3 (380 aa).

Residues 1–9 (MRNCKMARV) are Cytoplasmic-facing. Residues 10–33 (ASVLGLVMLSVALLILSLISYVSL) traverse the membrane as a helical; Signal-anchor for type II membrane protein segment. The Lumenal portion of the chain corresponds to 34–380 (KKENIFTTPK…LTKLTLSHCA (347 aa)). N-linked (GlcNAc...) asparagine glycosylation is found at Asn-93, Asn-113, and Asn-160. Disulfide bonds link Cys-162–Cys-313 and Cys-176–Cys-379. CMP-N-acetyl-beta-neuraminate-binding residues include Asn-167 and Asn-190. Asn-206 is a glycosylation site (N-linked (GlcNAc...) asparagine). CMP-N-acetyl-beta-neuraminate is bound by residues Ser-300, Thr-301, Gly-302, Trp-322, Tyr-336, and His-337. His-354 (proton donor/acceptor) is an active-site residue.

The protein belongs to the glycosyltransferase 29 family. Homodimer. Post-translationally, autopolysialylated. Expressed in fetal and adult brain and fetal liver.

It localises to the golgi apparatus membrane. The enzyme catalyses [N-acetyl-alpha-D-neuraminosyl-(2-&gt;8)](n) + CMP-N-acetyl-beta-neuraminate = [N-acetyl-alpha-D-neuraminosyl-(2-&gt;8)](n+1) + CMP + H(+). It carries out the reaction alpha-Neu5Ac-(2-&gt;3)-beta-D-Gal-(1-&gt;4)-6S-D-GlcNAc + CMP-N-acetyl-beta-neuraminate = alpha-Neu5Ac-(2-&gt;8)-alpha-Neu5Ac-(2-&gt;3)-beta-D-Gal-(1-&gt;4)-6S-D-GlcNAc + CMP + H(+). The catalysed reaction is a ganglioside GM3 (d18:1(4E)) + CMP-N-acetyl-beta-neuraminate = a ganglioside GD3 (d18:1(4E)) + CMP + H(+). It catalyses the reaction a ganglioside GM3 + CMP-N-acetyl-beta-neuraminate = a ganglioside GD3 + CMP + H(+). The enzyme catalyses an N-acetyl-alpha-neuraminyl-(2-&gt;3)-beta-D-galactosyl derivative + CMP-N-acetyl-beta-neuraminate = an N-acetyl-alpha-neuraminyl-(2-&gt;8)-N-acetyl-alpha-neuraminyl-(2-&gt;3)-beta-D-galactosyl derivative + CMP + H(+). It carries out the reaction an N-acetyl-alpha-neuraminyl-(2-&gt;3)-beta-D-galactosyl-(1-&gt;4)-N-acetyl-beta-D-glucosaminyl derivative + CMP-N-acetyl-beta-neuraminate = an alpha-Neu5Ac-(2-&gt;8)-alpha-Neu5Ac-(2-&gt;3)-beta-D-Gal-(1-&gt;4)-beta-D-GlcNAc derivative + CMP + H(+). Its pathway is protein modification; protein glycosylation. Catalyzes the transfer of sialic acid from a CMP-linked sialic acid donor onto a terminal alpha-2,3-, alpha-2,6-, or alpha-2,8-linked sialic acid of an acceptor, such as N-linked oligosaccharides of glycoproteins and glycolipids through alpha-2,8-linkages. Forms oligosialic and polysialic acid on various sialylated N-acetyllactosamine oligosaccharides of glycoproteins, including FETUB N-glycans, a2-HS-glycoprotein (AHSG) and alpha 2,3-sialylated glycosphingolipids, such as alpha 2,3-sialylparagloboside and ganglioside GM3 and to a lesser extent NCAM1 N-glycans. However, it is much more specific to N-linked oligosaccharides of glycoproteins than glycosphingolipids. 2,3-sialylparagloboside serves as the best acceptor substrate among the glycolipids. alpha-Neu5Ac-(2-&gt;8)-alpha-Neu5Ac-(2-&gt;3)-beta-D-Gal-(1-&gt;4)-6S-D-GlcNAc and monosialyl and disialyl N-acetyllactosamines are the best acceptor substrates among glycoproteins. May plays critical role in the striatum by mediating the formation of disialylated and trisialylated terminal glycotopes on N- and O-glycans of specific striatal proteins, regulating their distribution in lipid rafts, affecting their interaction with other binding partners, and subsequently modulating striatal functions. This chain is Alpha-N-acetylneuraminate alpha-2,8-sialyltransferase ST8SIA3, found in Homo sapiens (Human).